The sequence spans 1709 residues: Intraflagellar transport protein 122 (1709 aa).

WD repeat units follow at residues 51 to 89 and 132 to 171; these read TQHP…ALFK and SFKG…LNSC. A disordered region spans residues 209-229; it reads TIPQTVTPSASASGRSGSGKR. A WD 3 repeat occupies 634-673; it reads LHRSPIVSLDISPDRKYISVVDRSDVVSVYKFLDDSEIVL. The stretch at 1231 to 1256 is one LRR 1 repeat; that stretch reads IEALERLRLSGNTSKEAIIIKQLIDA. Residues 1378–1404 are disordered; the sequence is LSGEDTVKASSQRSKKDNPPSLRSTIG. The stretch at 1414–1436 is one LRR 2 repeat; that stretch reads LGSLAHIDLGINNMNIPPGISEL.

It localises to the cell projection. The protein resides in the cilium. The protein localises to the flagellum. Its subcellular location is the cytoplasm. It is found in the cytoskeleton. It localises to the flagellum axoneme. The protein resides in the flagellum basal body. Functionally, component of the intraflagellar transport complex A (IFT-A) involved in flagellar assembly. The protein is Intraflagellar transport protein 122 of Giardia intestinalis (strain ATCC 50803 / WB clone C6) (Giardia lamblia).